The chain runs to 1048 residues: MENQHQKFISRRNFIKTSALLGGTAFLGTGLPNIKKTYSKELDYVGNFEYPLAKPENILYSACLQCTVACSIKVKINNGVCMKIDGNPYSAMNLGENLPYDLSPKEAVSIDGKLCPKGQAGIQHAYDPYRLRKVIKRDGPRGSGKWKTIPYDQAIDEIVNGGNIFKDIGENQNVEGLKDIFVLKDPKVAKAMADDVTKIRKKEMTVDEFKAKHKDNLDVLIDPNHPDLGPKNNQFLFQVGRIHNGRIEFTKRFVNDSFGSVNWIEKTTLCGQTSNKAWVHSTREYLEGKWTGGIKSPRPDHRNTEFLLVFGSIVFEANYGPVQETEPITEGLESGRLKIAVVDPRLTKVASKAWKWVPIKPGNDAAFALGMIRWIIENERYDTKFLQNATRLAATNSDEPSYSNATYLVKVEKDGRAAKHLRANEIGIGTEKEFVVISNGKPAAVDPENSNLAIQGELFVDTNLEGIKVKSPLQLIKEEAYSKELAEWAELSGAKQKDIEDISKEFTSHGKKAAVEFYRGAIKHTNGWYNGQALIVLNHLIGNMNWQGGISNTGGGWSYIGDKEGQPYPMANLHPNKLSKFGVPITKEGWKYEESTLFEGYPAKRPWYPFSGNVAQETWPSISDGYPYKIKAALISSHSPMYSLPGGHVQLKTLLDTEKVPLLIASDIVIGDSSQYVDYIFPDLTYLERWATPGQSHHIRVKVNQVRQPVIAPLTENATVFGEEVPISLEALMMSISEKVGLSGFGKDAFGPGKDLNRMEDFYLKLVANIASGNKQGELVKAADSEEMELFKSSHRHLPKTVYDIEKWQQTLTSDEWKRVVYVLNRGGRFASSDDAYEGSFIKKKIPGLARLYLEEIADSRNSISGNYFTGYPKYLPIMDMAENLINDEGEFHLITNKEVFGTQSRTITNYWAQLALQPENFVVLNSVDAKKLKVDNGDKVLVTSTSNPKGEHLIAADESRPTIGKVKIVEGIRPGVVAISTHYGHWGYGARDIQIDGEVVKGEEVRGLGIHPNPLFRLDDNLRGTTLSDPIGGSASYYDTRVNIQRV.

Residues 1–39 constitute a signal peptide (tat-type signal); the sequence is MENQHQKFISRRNFIKTSALLGGTAFLGTGLPNIKKTYS. One can recognise a 4Fe-4S Mo/W bis-MGD-type domain in the interval 56–129; sequence ENILYSACLQ…AGIQHAYDPY (74 aa). [4Fe-4S] cluster-binding residues include cysteine 63, cysteine 66, cysteine 70, and cysteine 115. Cysteine 270 lines the Mo-bis(molybdopterin guanine dinucleotide) pocket.

Belongs to the prokaryotic molybdopterin-containing oxidoreductase family. In terms of assembly, the complex is composed of three subunits: SrdA, SrdB and SrdC. It depends on [4Fe-4S] cluster as a cofactor. Requires Mo-bis(molybdopterin guanine dinucleotide) as cofactor. Predicted to be exported by the Tat system. The position of the signal peptide cleavage has not been experimentally proven.

It localises to the secreted. It carries out the reaction selenite + a quinone + H2O = selenate + a quinol. Its function is as follows. Component of the respiratory selenate reductase complex, which catalyzes the reduction of selenate to selenite. SrdA is probably the catalytic subunit that reduces selenate. This Mesobacillus selenatarsenatis (strain DSM 18680 / JCM 14380 / FERM P-15431 / SF-1) protein is Selenate reductase subunit A.